The sequence spans 157 residues: Transcriptional repressor NrdR (157 aa).

Positions 1-22 (MRCPKCGATKSSVIDSRQAEEG) are disordered. A zinc finger lies at 3 to 34 (CPKCGATKSSVIDSRQAEEGNTIRRRRECDEC). The ATP-cone domain occupies 49 to 139 (LVVVKKDGTR…VYRSFKDVSE (91 aa)).

Belongs to the NrdR family. The cofactor is Zn(2+).

In terms of biological role, negatively regulates transcription of bacterial ribonucleotide reductase nrd genes and operons by binding to NrdR-boxes. The sequence is that of Transcriptional repressor NrdR from Streptococcus pneumoniae (strain Hungary19A-6).